The following is a 557-amino-acid chain: Trigger factor (557 aa).

Residues 169-255 form the PPIase FKBP-type domain; that stretch reads GDVVVIDFQA…LKEIKTKELP (87 aa). The disordered stretch occupies residues 438–557; that stretch reads WVDSEGNPTE…KAGKKSKKDK (120 aa). The span at 455–466 shows a compositional bias: basic and acidic residues; it reads SEGEDRQERSES.

The protein belongs to the FKBP-type PPIase family. Tig subfamily.

It is found in the cytoplasm. It carries out the reaction [protein]-peptidylproline (omega=180) = [protein]-peptidylproline (omega=0). In terms of biological role, involved in protein export. Acts as a chaperone by maintaining the newly synthesized protein in an open conformation. Functions as a peptidyl-prolyl cis-trans isomerase. This is Trigger factor from Synechococcus sp. (strain JA-3-3Ab) (Cyanobacteria bacterium Yellowstone A-Prime).